A 57-amino-acid polypeptide reads, in one-letter code: Large ribosomal subunit protein bL33 (57 aa).

It belongs to the bacterial ribosomal protein bL33 family.

The protein is Large ribosomal subunit protein bL33 of Shewanella halifaxensis (strain HAW-EB4).